Here is a 328-residue protein sequence, read N- to C-terminus: MSHVELQPGFDFQQAGKEVLAIERECLAELDQYINQNFTLACEKMFWCKGKVVVMGMGKSGHIGRKMAATFASTGTPSFFVHPGEAAHGDLGMVTPQDVVIAISNSGESSEITALIPVLKRLHIPLICITGRPESSMARAADVHLCVKVAKEACPLGLAPTSSTTATLVMGDALAVALLKARGFTAEDFALSHPGGALGRKLLLRVNDIMHTGDEIPHVKKTASLRDALLEVTRKNLGMTVICDDNMMIEGIFTDGDLRRVFDMGVDVRQLSIADVMTPGGIRVRPGILAVEALNLMQSRHITSVMVADGDHLLGVLHMHDLLRAGVV.

The 143-residue stretch at 42 to 184 folds into the SIS domain; sequence CEKMFWCKGK…AVALLKARGF (143 aa). Residues 75-76, His-82, His-88, 114-123, 148-150, Thr-222, and Asp-275 contribute to the substrate site; these read GT, ALIPVLKRLH, and KVA. His-82 is a binding site for Zn(2+). A CBS 1 domain is found at 210 to 268; the sequence is MHTGDEIPHVKKTASLRDALLEVTRKNLGMTVICDDNMMIEGIFTDGDLRRVFDMGVDV. The CBS 2 domain maps to 277–328; that stretch reads MTPGGIRVRPGILAVEALNLMQSRHITSVMVADGDHLLGVLHMHDLLRAGVV.

This sequence belongs to the SIS family. GutQ/KpsF subfamily. As to quaternary structure, homotetramer.

The enzyme catalyses D-arabinose 5-phosphate = D-ribulose 5-phosphate. It functions in the pathway carbohydrate biosynthesis; 3-deoxy-D-manno-octulosonate biosynthesis; 3-deoxy-D-manno-octulosonate from D-ribulose 5-phosphate: step 1/3. It participates in bacterial outer membrane biogenesis; lipopolysaccharide biosynthesis. Functionally, involved in the biosynthesis of 3-deoxy-D-manno-octulosonate (KDO), a unique 8-carbon sugar component of lipopolysaccharides (LPSs). Catalyzes the reversible aldol-ketol isomerization between D-ribulose 5-phosphate (Ru5P) and D-arabinose 5-phosphate (A5P). The protein is Arabinose 5-phosphate isomerase KdsD (kdsD) of Escherichia coli O157:H7.